A 445-amino-acid chain; its full sequence is Protein cereblon (445 aa).

The disordered stretch occupies residues 1–50; it reads MAAEEGGDGRRNMGNPPPPAPAESEEEDDNEMEVEDQDGKEAEKPNMINF. Residues 23–36 are compositionally biased toward acidic residues; that stretch reads ESEEEDDNEMEVED. Positions 82–321 constitute a Lon N-terminal domain; sequence IPVLPHVMVM…CELDIMNKCT (240 aa). Residues 320 to 428 form the CULT domain; it reads CTSLCCKQCQ…LTRSALLPRI (109 aa). Zn(2+) contacts are provided by cysteine 325 and cysteine 328. Residues histidine 380, tryptophan 382, and tryptophan 388 each coordinate (S)-thalidomide. The Zn(2+) site is built by cysteine 393 and cysteine 396.

This sequence belongs to the CRBN family. In terms of assembly, component of a DCX (DDB1-CUL4-X-box) protein ligase complex. Interacts directly with DDB1.

It is found in the cytoplasm. The protein resides in the nucleus. The protein operates within protein modification; protein ubiquitination. In terms of biological role, substrate recognition component of a DCX (DDB1-CUL4-X-box) E3 protein ligase complex that mediates the ubiquitination and subsequent proteasomal degradation of target proteins, such as MEIS2. Normal degradation of key regulatory proteins is required for normal limb outgrowth and expression of the fibroblast growth factor FGF8. Maintains presynaptic glutamate release and consequently cognitive functions, such as memory and learning, by negatively regulating large-conductance calcium-activated potassium (BK) channels in excitatory neurons. Likely to function by regulating the assembly and neuronal surface expression of BK channels via its interaction with KCNT1. May also be involved in regulating anxiety-like behaviors via a BK channel-independent mechanism. In Gallus gallus (Chicken), this protein is Protein cereblon (CRBN).